Here is a 488-residue protein sequence, read N- to C-terminus: SAGA complex subunit HFI1 (488 aa).

Disordered stretches follow at residues 1–58 (MSAI…QGPN) and 352–383 (QLDDDKNEDECADEAKSINNGNNSSKDDIGDI). Polar residues predominate over residues 37 to 58 (AVSNHTEPNNGNNETAEPQGPN).

In terms of assembly, component of the 1.8 MDa SAGA (Spt-Ada-Gcn5 acetyltransferase) complex, which is composed of 19 subunits TRA1, SPT7, TAF5, NGG1/ADA3, SGF73, SPT20/ADA5, SPT8, TAF12, TAF6, HFI1/ADA1, UBP8, GCN5, ADA2, SPT3, SGF29, TAF10, TAF9, SGF11 and SUS1. The SAGA complex is composed of 4 modules, namely the HAT (histone acetyltransferase) module (GCN5, ADA2, NGG1/ADA3 and SGF29), the DUB (deubiquitinating) module (UBP8, SGF11, SGF73 and SUS1), the core or TAF (TBP-associated factor) module (TAF5, TAF6, TAF9, TAF10 and TAF12), and the Tra1 or SPT (Suppressor of Ty) module (TRA1, HFI1/ADA1, SPT3, SPT7, SPT8 and SPT20/ADA5). The Tra1/SPT module binds activators, the core module recruits TBP (TATA-binding protein), the HAT module contains the histone H3 acetyltransferase GCN5, and the DUB module comprises the histone H2B deubiquitinase UBP8. Also identified in an altered form of SAGA, named SALSA (SAGA altered, Spt8 absent) or SLIK (SAGA-like) complex, which contains a C-terminal truncated form of SPT7 and is missing SPT8. However, it has been shown that the SAGA and SAGA-like SALSA/SLIK transcriptional coactivators are structurally and biochemically equivalent. Component of an ADA/GCN5 complex that consists of HFI1/ADA1, ADA2, NGG1/ADA3, SPT20/ADA5 and GCN5 and probably is a subcomplex of SAGA.

It localises to the nucleus. In terms of biological role, component of the transcription coactivator SAGA complex. SAGA acts as a general cofactor required for essentially all RNA polymerase II transcription. At the promoters, SAGA is required for transcription pre-initiation complex (PIC) recruitment. It influences RNA polymerase II transcriptional activity through different activities such as TBP interaction (via core/TAF module) and promoter selectivity, interaction with transcription activators (via Tra1/SPT module), and chromatin modification through histone acetylation (via HAT module) and deubiquitination (via DUB module). SAGA preferentially acetylates histones H3 (to form H3K9ac, H3K14ac, H3K18ac and H3K23ac) and H2B and deubiquitinates histone H2B. SAGA interacts with DNA via upstream activating sequences (UASs). Also identified in a modified version of SAGA named SALSA or SLIK. The cleavage of SPT7 and the absence of the SPT8 subunit in SLIK neither drive any major conformational differences in its structure compared with SAGA, nor significantly affect HAT, DUB, or DNA-binding activities. This Saccharomyces cerevisiae (strain ATCC 204508 / S288c) (Baker's yeast) protein is SAGA complex subunit HFI1 (HFI1).